A 194-amino-acid chain; its full sequence is AP-3 complex subunit sigma (194 aa).

It belongs to the adaptor complexes small subunit family. Adaptor protein complex 3 (AP-3) is a heterotetramer composed of 2 large adaptins (APL5 and APL6), a medium adaptin (APM3) and a small adaptin (APS3).

Its subcellular location is the golgi apparatus. The protein localises to the cytoplasmic vesicle membrane. Functionally, part of the AP-3 complex, an adaptor-related complex which is not clathrin-associated. The complex is associated with the Golgi region as well as more peripheral structures. It facilitates the budding of vesicles from the Golgi membrane and may be directly involved in trafficking to the vacuole. Required for the transport via the ALP pathway, which directs the transport of the cargo proteins PHO8 and VAM3 to the vacuole. The sequence is that of AP-3 complex subunit sigma (APS3) from Saccharomyces cerevisiae (strain ATCC 204508 / S288c) (Baker's yeast).